A 573-amino-acid polypeptide reads, in one-letter code: Oxygen sensor histidine kinase response regulator DosT (573 aa).

GAF domains lie at Lys-61–Val-198 and Asp-229–Trp-366. A heme-binding site is contributed by His-147. The 194-residue stretch at Ile-380 to Arg-573 folds into the Histidine kinase domain. At His-392 the chain carries Phosphohistidine; by autocatalysis.

The cofactor is Mg(2+). Heme serves as cofactor.

Its subcellular location is the cytoplasm. Functionally, interacts with the two-component regulatory system DevR/DevS (DosR/DosS) involved in onset of the dormancy response. Required for full induction of the DevR (DosR) regulon; required during early adaptation to anaerobiosis, to start induction of the DevR regulon. May act as a direct hypoxia/oxygen sensor. May be the secondary sensor for CO. Donates a phosphate group to DevR (DosR). This Mycobacterium tuberculosis (strain CDC 1551 / Oshkosh) protein is Oxygen sensor histidine kinase response regulator DosT (dosT).